Consider the following 216-residue polypeptide: Fibroblast growth factor 17 (216 aa).

Residues 1–22 (MGAARLLPNLTLCLQLLILCCQ) form the signal peptide. Residue N137 is glycosylated (N-linked (GlcNAc...) asparagine). Positions 190–216 (EKQKQFEFVGSAPTRRTKRTRRPQPLT) are disordered. Residues 204 to 216 (RRTKRTRRPQPLT) are compositionally biased toward basic residues.

This sequence belongs to the heparin-binding growth factors family. In terms of assembly, interacts with FGFR3 and FGFR4. As to expression, preferentially expressed in the embryonic brain.

The protein resides in the secreted. Its function is as follows. Plays an important role in the regulation of embryonic development and as signaling molecule in the induction and patterning of the embryonic brain. Required for normal brain development. This chain is Fibroblast growth factor 17 (FGF17), found in Homo sapiens (Human).